The sequence spans 399 residues: Type II secretion system protein L (399 aa).

The Cytoplasmic segment spans residues 1 to 247 (MSKAENTSGK…VKPWKQALLP (247 aa)). A helical transmembrane segment spans residues 248-264 (WRNVLIALSAWLLLVLG). Over 265–399 (ESVWTHYQWY…EGQLTLRSQP (135 aa)) the chain is Periplasmic.

It belongs to the GSP L family. Type II secretion system is composed of four main components: the outer membrane complex, the inner membrane complex, the cytoplasmic secretion ATPase and the periplasm-spanning pseudopilus. Forms homodimers. Interacts with OutM/GspM. Interacts with OutE/GspE and OutF/GspF.

It localises to the cell inner membrane. Functionally, inner membrane component of the type II secretion system required for the energy-dependent secretion of extracellular factors such as proteases and toxins from the periplasm. Plays a role in the complex assembly and recruits OutM resulting in a stable complex in the inner membrane. Provides thus a link between the energy-providing OutE protein in the cytoplasm and the rest of the T2SS machinery. The chain is Type II secretion system protein L (outL) from Dickeya chrysanthemi (Pectobacterium chrysanthemi).